Reading from the N-terminus, the 123-residue chain is Probable non-functional immunoglobulin lambda variable 11-55 (123 aa).

The first 19 residues, 1-19, serve as a signal peptide directing secretion; that stretch reads MALTPLLLLLLSHCTGSLS. The tract at residues 20 to 44 is framework-1; it reads RPVLTQPPSLSASPGATARLPCTLS. The Ig-like domain occupies 21–123; sequence PVLTQPPSLS…YCQVYESSAN (103 aa). Residues Cys41 and Cys115 are joined by a disulfide bond. The tract at residues 45-53 is complementarity-determining-1; that stretch reads SDLSVGGKN. The segment at 54–70 is framework-2; it reads MFWYQQKLGSSPRLFLY. The tract at residues 71-77 is complementarity-determining-2; sequence HYSDSDK. The framework-3 stretch occupies residues 78-115; the sequence is QLGPGVPSRVSGSKETSSNTAFLLISGLQPEDEADYYC. The segment at 116–123 is complementarity-determining-3; sequence QVYESSAN.

As to quaternary structure, immunoglobulins are composed of two identical heavy chains and two identical light chains; disulfide-linked.

It localises to the secreted. The protein localises to the cell membrane. Probable non-functional open reading frame (ORF) of V region of the variable domain of immunoglobulin light chains. Non-functional ORF generally cannot participate in the synthesis of a productive immunoglobulin chain due to altered V-(D)-J or switch recombination and/or splicing site (at mRNA level) and/or conserved amino acid change (protein level). Immunoglobulins, also known as antibodies, are membrane-bound or secreted glycoproteins produced by B lymphocytes. In the recognition phase of humoral immunity, the membrane-bound immunoglobulins serve as receptors which, upon binding of a specific antigen, trigger the clonal expansion and differentiation of B lymphocytes into immunoglobulins-secreting plasma cells. Secreted immunoglobulins mediate the effector phase of humoral immunity, which results in the elimination of bound antigens. The antigen binding site is formed by the variable domain of one heavy chain, together with that of its associated light chain. Thus, each immunoglobulin has two antigen binding sites with remarkable affinity for a particular antigen. The variable domains are assembled by a process called V-(D)-J rearrangement and can then be subjected to somatic hypermutations which, after exposure to antigen and selection, allow affinity maturation for a particular antigen. The polypeptide is Probable non-functional immunoglobulin lambda variable 11-55 (Homo sapiens (Human)).